Consider the following 201-residue polypeptide: Holliday junction branch migration complex subunit RuvA (201 aa).

The interval 1 to 64 is domain I; the sequence is MIGRLHGKII…EDAHLLFGFA (64 aa). The domain II stretch occupies residues 65–143; it reads QKQDRTLFRE…GVAQSDFFEE (79 aa). Residues 144 to 154 form a flexible linker region; that stretch reads HSVETIVATHS. The tract at residues 154–201 is domain III; sequence SHDPADEARDALVALGYKLADAEKMIKKVNKAGATSEQLIREALKASL.

Belongs to the RuvA family. In terms of assembly, homotetramer. Forms an RuvA(8)-RuvB(12)-Holliday junction (HJ) complex. HJ DNA is sandwiched between 2 RuvA tetramers; dsDNA enters through RuvA and exits via RuvB. An RuvB hexamer assembles on each DNA strand where it exits the tetramer. Each RuvB hexamer is contacted by two RuvA subunits (via domain III) on 2 adjacent RuvB subunits; this complex drives branch migration. In the full resolvosome a probable DNA-RuvA(4)-RuvB(12)-RuvC(2) complex forms which resolves the HJ.

The protein localises to the cytoplasm. In terms of biological role, the RuvA-RuvB-RuvC complex processes Holliday junction (HJ) DNA during genetic recombination and DNA repair, while the RuvA-RuvB complex plays an important role in the rescue of blocked DNA replication forks via replication fork reversal (RFR). RuvA specifically binds to HJ cruciform DNA, conferring on it an open structure. The RuvB hexamer acts as an ATP-dependent pump, pulling dsDNA into and through the RuvAB complex. HJ branch migration allows RuvC to scan DNA until it finds its consensus sequence, where it cleaves and resolves the cruciform DNA. The sequence is that of Holliday junction branch migration complex subunit RuvA from Actinobacillus pleuropneumoniae serotype 5b (strain L20).